The following is a 152-amino-acid chain: Transcriptional repressor NrdR (152 aa).

A zinc finger lies at 3 to 33 (CSICKKGETSVVDSRPTEDGTAIRRRRLCVC). The ATP-cone domain maps to 48–138 (IMVVKKNGRK…VYRNFREEKD (91 aa)).

It belongs to the NrdR family. It depends on Zn(2+) as a cofactor.

In terms of biological role, negatively regulates transcription of bacterial ribonucleotide reductase nrd genes and operons by binding to NrdR-boxes. The chain is Transcriptional repressor NrdR from Pelagibacter ubique (strain HTCC1062).